Consider the following 439-residue polypeptide: 3beta-hydroxysteroid-dehydrogenase/decarboxylase isoform 1 (439 aa).

16–21 (GGRGFA) is an NAD(+) binding site. N-linked (GlcNAc...) asparagine glycosylation is found at Asn-75 and Asn-158. 2 residues coordinate NAD(+): Tyr-161 and Lys-165. Catalysis depends on Lys-165, which acts as the Proton donor. Asn-327 carries N-linked (GlcNAc...) asparagine glycosylation. Residues 371 to 439 (VTETIQWKKQ…MKVFGSKKID (69 aa)) form the Reticulon; atypical domain. Helical transmembrane passes span 381–401 (TLIAIVILITLYHNFVATTGS) and 405–425 (IITAVSKVLLVSSIFMFINGI).

This sequence belongs to the 3-beta-HSD family.

Its subcellular location is the endoplasmic reticulum membrane. The enzyme catalyses a 3beta-hydroxysteroid-4alpha-carboxylate + NAD(+) = a 3-oxosteroid + CO2 + NADH. It catalyses the reaction 4alpha-carboxy-4beta,14alpha-dimethyl-9beta,19-cyclo-5alpha-ergost-24(24(1))-en-3beta-ol + NAD(+) = cycloeucalenone + CO2 + NADH. Its pathway is steroid biosynthesis; zymosterol biosynthesis; zymosterol from lanosterol: step 4/6. Its function is as follows. 3beta-hydroxysteroid-dehydrogenase/decarboxylase involved in sterol synthesis. Catalyzes the formation of 3-oxosteroids from 3beta-hydroxysteroids-4alpha-carboxylate. Involved in the regulation of inflorescence internodes and leaves growth, probably by affecting auxin transporter activity possibly by altering sterol composition in the membranes. In Arabidopsis thaliana (Mouse-ear cress), this protein is 3beta-hydroxysteroid-dehydrogenase/decarboxylase isoform 1.